Reading from the N-terminus, the 455-residue chain is Catalase-like protein (455 aa).

Residues 1-25 (MSQQDKKLTGVFGHPVSDRENSMTA) are disordered.

This sequence belongs to the catalase family.

Catalytically inactive. In Staphylococcus aureus, this protein is Catalase-like protein (katB).